The chain runs to 271 residues: Mannosyl-3-phosphoglycerate phosphatase (271 aa).

Catalysis depends on D13, which acts as the Nucleophile. Mg(2+) contacts are provided by D13, D15, and D214.

Belongs to the HAD-like hydrolase superfamily. MPGP family. The cofactor is Mg(2+).

It is found in the cytoplasm. The catalysed reaction is 2-O-(alpha-D-mannosyl)-3-phosphoglycerate + H2O = (2R)-2-O-(alpha-D-mannosyl)-glycerate + phosphate. This is Mannosyl-3-phosphoglycerate phosphatase from Escherichia coli O45:K1 (strain S88 / ExPEC).